The following is a 301-amino-acid chain: Ornithine carbamoyltransferase (301 aa).

Residues R100 and H127–Q130 each bind carbamoyl phosphate. Residues N158, D221, and S225–M226 contribute to the L-ornithine site. Carbamoyl phosphate is bound by residues C260 and R288.

Belongs to the aspartate/ornithine carbamoyltransferase superfamily. OTCase family.

It localises to the cytoplasm. It catalyses the reaction carbamoyl phosphate + L-ornithine = L-citrulline + phosphate + H(+). Its pathway is amino-acid biosynthesis; L-arginine biosynthesis; L-arginine from L-ornithine and carbamoyl phosphate: step 1/3. Functionally, reversibly catalyzes the transfer of the carbamoyl group from carbamoyl phosphate (CP) to the N(epsilon) atom of ornithine (ORN) to produce L-citrulline. In Vibrio sp. (strain 2693), this protein is Ornithine carbamoyltransferase (argF).